The chain runs to 450 residues: uncharacterized protein (450 aa).

The span at 141 to 151 (WLDKTDGEKNS) shows a compositional bias: basic and acidic residues. Disordered regions lie at residues 141–171 (WLDK…DSAG), 276–298 (LQDS…AVSQ), and 395–416 (DDED…LSRN). Over residues 152–171 (EASSTDNSLENSTKGADSAG) the composition is skewed to polar residues. Residues 283–298 (QGDKGEKESKDDAVSQ) show a composition bias toward basic and acidic residues. The segment covering 395-411 (DDEDEDNVDNSEGDEES) has biased composition (acidic residues).

This is an uncharacterized protein from Saccharomyces cerevisiae (strain ATCC 204508 / S288c) (Baker's yeast).